Reading from the N-terminus, the 342-residue chain is S-adenosylmethionine:tRNA ribosyltransferase-isomerase (342 aa).

It belongs to the QueA family. Monomer.

The protein resides in the cytoplasm. The catalysed reaction is 7-aminomethyl-7-carbaguanosine(34) in tRNA + S-adenosyl-L-methionine = epoxyqueuosine(34) in tRNA + adenine + L-methionine + 2 H(+). It participates in tRNA modification; tRNA-queuosine biosynthesis. In terms of biological role, transfers and isomerizes the ribose moiety from AdoMet to the 7-aminomethyl group of 7-deazaguanine (preQ1-tRNA) to give epoxyqueuosine (oQ-tRNA). The sequence is that of S-adenosylmethionine:tRNA ribosyltransferase-isomerase from Listeria monocytogenes serotype 4b (strain F2365).